A 334-amino-acid polypeptide reads, in one-letter code: Holliday junction branch migration complex subunit RuvB (334 aa).

The segment at 4 to 184 (ADRLIQPQLQ…FGIPLRLEFY (181 aa)) is large ATPase domain (RuvB-L). ATP is bound by residues Arg-24, Gly-65, Lys-68, Thr-69, Thr-70, 131–133 (EDY), Arg-174, Tyr-184, and Arg-221. Thr-69 contacts Mg(2+). The interval 185-255 (NVKDLSTIVS…VAEHALDLLD (71 aa)) is small ATPAse domain (RuvB-S). Residues 258 to 334 (GEGFDYMDRK…YLHFGMIKPE (77 aa)) form a head domain (RuvB-H) region. Residues Arg-294, Arg-313, and Arg-318 each coordinate DNA.

It belongs to the RuvB family. In terms of assembly, homohexamer. Forms an RuvA(8)-RuvB(12)-Holliday junction (HJ) complex. HJ DNA is sandwiched between 2 RuvA tetramers; dsDNA enters through RuvA and exits via RuvB. An RuvB hexamer assembles on each DNA strand where it exits the tetramer. Each RuvB hexamer is contacted by two RuvA subunits (via domain III) on 2 adjacent RuvB subunits; this complex drives branch migration. In the full resolvosome a probable DNA-RuvA(4)-RuvB(12)-RuvC(2) complex forms which resolves the HJ.

The protein localises to the cytoplasm. The enzyme catalyses ATP + H2O = ADP + phosphate + H(+). In terms of biological role, the RuvA-RuvB-RuvC complex processes Holliday junction (HJ) DNA during genetic recombination and DNA repair, while the RuvA-RuvB complex plays an important role in the rescue of blocked DNA replication forks via replication fork reversal (RFR). RuvA specifically binds to HJ cruciform DNA, conferring on it an open structure. The RuvB hexamer acts as an ATP-dependent pump, pulling dsDNA into and through the RuvAB complex. RuvB forms 2 homohexamers on either side of HJ DNA bound by 1 or 2 RuvA tetramers; 4 subunits per hexamer contact DNA at a time. Coordinated motions by a converter formed by DNA-disengaged RuvB subunits stimulates ATP hydrolysis and nucleotide exchange. Immobilization of the converter enables RuvB to convert the ATP-contained energy into a lever motion, pulling 2 nucleotides of DNA out of the RuvA tetramer per ATP hydrolyzed, thus driving DNA branch migration. The RuvB motors rotate together with the DNA substrate, which together with the progressing nucleotide cycle form the mechanistic basis for DNA recombination by continuous HJ branch migration. Branch migration allows RuvC to scan DNA until it finds its consensus sequence, where it cleaves and resolves cruciform DNA. This Shewanella sp. (strain MR-7) protein is Holliday junction branch migration complex subunit RuvB.